The primary structure comprises 355 residues: UDP-N-acetylglucosamine--N-acetylmuramyl-(pentapeptide) pyrophosphoryl-undecaprenol N-acetylglucosamine transferase (355 aa).

Residues 15 to 17, N127, R163, S191, I244, 263 to 268, and Q288 contribute to the UDP-N-acetyl-alpha-D-glucosamine site; these read TGG and ALTVSE.

It belongs to the glycosyltransferase 28 family. MurG subfamily.

The protein localises to the cell inner membrane. It carries out the reaction di-trans,octa-cis-undecaprenyl diphospho-N-acetyl-alpha-D-muramoyl-L-alanyl-D-glutamyl-meso-2,6-diaminopimeloyl-D-alanyl-D-alanine + UDP-N-acetyl-alpha-D-glucosamine = di-trans,octa-cis-undecaprenyl diphospho-[N-acetyl-alpha-D-glucosaminyl-(1-&gt;4)]-N-acetyl-alpha-D-muramoyl-L-alanyl-D-glutamyl-meso-2,6-diaminopimeloyl-D-alanyl-D-alanine + UDP + H(+). It functions in the pathway cell wall biogenesis; peptidoglycan biosynthesis. Functionally, cell wall formation. Catalyzes the transfer of a GlcNAc subunit on undecaprenyl-pyrophosphoryl-MurNAc-pentapeptide (lipid intermediate I) to form undecaprenyl-pyrophosphoryl-MurNAc-(pentapeptide)GlcNAc (lipid intermediate II). This Photorhabdus laumondii subsp. laumondii (strain DSM 15139 / CIP 105565 / TT01) (Photorhabdus luminescens subsp. laumondii) protein is UDP-N-acetylglucosamine--N-acetylmuramyl-(pentapeptide) pyrophosphoryl-undecaprenol N-acetylglucosamine transferase.